We begin with the raw amino-acid sequence, 1174 residues long: Pecanex-like protein 4 (1174 aa).

The next 14 helical transmembrane spans lie at 40–60, 72–92, 140–160, 173–193, 217–237, 244–264, 284–304, 307–327, 366–386, 394–414, 451–471, 543–563, 580–600, and 643–663; these read IYVNQIVLFLMPWALGGTGTL, AAALSGGLMVFTAAVIQLISV, TVFHSVLAGLVCGLGTWYLLP, TAVLFVFGWITLCIGEYSLIV, LYIFFFVSVDLAHRFIVNIPA, ILHILFVLLPFLWALGTLPPP, SMSTHLRLLVMFIVSAGAAVV, FIPSTVGVVLFMTGLGFLLSL, FLFIAVLGMALLEAGLLHHYV, SGAQAVVGYVLMVLLSIVWIL, IGAVRWILLTLVSPLAMVAFL, LIQFITKLQFAVTVLLALWTE, VFAPFVLGIIVLSTLLSSPLL, and LTAALQTAMAAGSLGLLLPGS. Positions 785 to 797 are enriched in polar residues; it reads PSTQENKTENTGE. The disordered stretch occupies residues 785–875; sequence PSTQENKTEN…DDHSAGTGPK (91 aa). An N-linked (GlcNAc...) asparagine glycan is attached at N790. A compositionally biased stretch (low complexity) spans 798-810; the sequence is ASPALPPAANSSP. Residues 835–846 show a composition bias toward basic and acidic residues; that stretch reads PAIKNRKEKLQS. N1122 and N1149 each carry an N-linked (GlcNAc...) asparagine glycan.

The protein belongs to the pecanex family.

It is found in the membrane. The chain is Pecanex-like protein 4 from Mus musculus (Mouse).